The following is a 100-amino-acid chain: Apolipoprotein C-II (100 aa).

The first 22 residues, 1–22 (MGSRFLLALFLVLLVLGCEVQA), serve as a signal peptide directing secretion. The tract at residues 66–74 (SVDEKLRDM) is lipid binding. The lipoprotein lipase cofactor stretch occupies residues 78–100 (SSAAMTTYASIFTDQIFTLLKGE).

It belongs to the apolipoprotein C2 family. In terms of processing, proapolipoprotein C-II is synthesized as a sialic acid containing glycoprotein which is subsequently desialylated prior to its proteolytic processing. Proapolipoprotein C-II, the major form found in plasma undergoes proteolytic cleavage of its N-terminal hexapeptide to generate the mature form apolipoprotein C-II, which occurs as the minor form in plasma.

It is found in the secreted. Component of chylomicrons, very low-density lipoproteins (VLDL), low-density lipoproteins (LDL), and high-density lipoproteins (HDL) in plasma. Plays an important role in lipoprotein metabolism as an activator of lipoprotein lipase. This is Apolipoprotein C-II (APOC2) from Bramus lutescens (Transcaucasian mole vole).